Consider the following 406-residue polypeptide: Paracaspase (406 aa).

The caspase-like stretch occupies residues 193-374 (IGNSKYSQHR…TERKNNNIST (182 aa)). Residues histidine 266 and cysteine 311 contribute to the active site.

Belongs to the peptidase C14B family.

Functionally, not required for DIF-induced autophagic cell death and necrotic cell death. This Dictyostelium discoideum (Social amoeba) protein is Paracaspase (pcp).